Consider the following 228-residue polypeptide: Pyridoxamine 5'-phosphate oxidase (228 aa).

20–23 contributes to the pyridoxal 5'-phosphate binding site; it reads QYDK. A Glycyl lysine isopeptide (Lys-Gly) (interchain with G-Cter in ubiquitin) cross-link involves residue lysine 29. 73–76 is an FMN binding site; that stretch reads RILL. Lysine 78 contacts pyridoxal 5'-phosphate. Residues 88-89, 95-96, and glutamine 118 contribute to the FMN site; these read YS and RK. Tyrosine 136, arginine 140, and serine 144 together coordinate pyridoxal 5'-phosphate. Residues 153–154 and tryptophan 199 each bind FMN; that span reads QS. 205–207 is a pyridoxal 5'-phosphate binding site; the sequence is RLH. FMN is bound at residue arginine 209.

It belongs to the pyridoxamine 5'-phosphate oxidase family. Homodimer. FMN serves as cofactor.

The protein resides in the mitochondrion intermembrane space. The catalysed reaction is pyridoxamine 5'-phosphate + O2 + H2O = pyridoxal 5'-phosphate + H2O2 + NH4(+). The enzyme catalyses pyridoxine 5'-phosphate + O2 = pyridoxal 5'-phosphate + H2O2. It participates in cofactor metabolism; pyridoxal 5'-phosphate salvage; pyridoxal 5'-phosphate from pyridoxamine 5'-phosphate: step 1/1. It functions in the pathway cofactor metabolism; pyridoxal 5'-phosphate salvage; pyridoxal 5'-phosphate from pyridoxine 5'-phosphate: step 1/1. Functionally, catalyzes the oxidation of either pyridoxine 5'-phosphate (PNP) or pyridoxamine 5'-phosphate (PMP) into pyridoxal 5'-phosphate (PLP). This Saccharomyces cerevisiae (strain ATCC 204508 / S288c) (Baker's yeast) protein is Pyridoxamine 5'-phosphate oxidase (PDX3).